The sequence spans 294 residues: Early 4 ORF6 protein (294 aa).

Positions A239–E255 match the Nuclear localization signal motif.

The protein belongs to the adenoviridae E4 30 to 34 kDa protein family. In terms of assembly, interacts with E1B-55k.

It is found in the host nucleus. Its subcellular location is the host cytoplasm. Its function is as follows. Plays a major role to prevent cellular inhibition of viral genome replication by nuclear bodies. Assembles an SCF-like E3 ubiquitin ligase complex based on the cellular proteins ELOB, ELOC, CUL5 and RBX1, in cooperation with viral E1B-55K. This viral RING-type ligase ubiquitinates cellular substrates prior to proteasomal degradation: p53/TP53, LIG4, MRE11-RAD50-NBS1 (MRN) complex, ITGA3, DAXX and BLM. This chain is Early 4 ORF6 protein, found in Homo sapiens (Human).